Here is a 170-residue protein sequence, read N- to C-terminus: Protein HemX (170 aa).

The span at 1-17 shows a compositional bias: polar residues; that stretch reads MTEQKNTNENDLQNGTS. Residues 1–24 are disordered; the sequence is MTEQKNTNENDLQNGTSKADDDIR. A helical membrane pass occupies residues 37-57; the sequence is GLIGSAVAILVILAIGGGLYY.

The protein resides in the cell membrane. In Proteus mirabilis, this protein is Protein HemX.